A 205-amino-acid polypeptide reads, in one-letter code: Holliday junction branch migration complex subunit RuvA (205 aa).

The domain I stretch occupies residues 1–64 (MIGRLRGVLV…EDAQLLYGFI (64 aa)). The interval 65–143 (TKQERALFRL…SLLETSAGSE (79 aa)) is domain II. The segment at 144–156 (REFMLKSNYTPAP) is flexible linker. The interval 157 to 205 (VVNTAEEDAIAALLSLGYKPAQASKAVSAAFKEGMSSEDLIKSSLKSML) is domain III.

Belongs to the RuvA family. Homotetramer. Forms an RuvA(8)-RuvB(12)-Holliday junction (HJ) complex. HJ DNA is sandwiched between 2 RuvA tetramers; dsDNA enters through RuvA and exits via RuvB. An RuvB hexamer assembles on each DNA strand where it exits the tetramer. Each RuvB hexamer is contacted by two RuvA subunits (via domain III) on 2 adjacent RuvB subunits; this complex drives branch migration. In the full resolvosome a probable DNA-RuvA(4)-RuvB(12)-RuvC(2) complex forms which resolves the HJ.

It is found in the cytoplasm. The RuvA-RuvB-RuvC complex processes Holliday junction (HJ) DNA during genetic recombination and DNA repair, while the RuvA-RuvB complex plays an important role in the rescue of blocked DNA replication forks via replication fork reversal (RFR). RuvA specifically binds to HJ cruciform DNA, conferring on it an open structure. The RuvB hexamer acts as an ATP-dependent pump, pulling dsDNA into and through the RuvAB complex. HJ branch migration allows RuvC to scan DNA until it finds its consensus sequence, where it cleaves and resolves the cruciform DNA. The polypeptide is Holliday junction branch migration complex subunit RuvA (Shewanella woodyi (strain ATCC 51908 / MS32)).